Reading from the N-terminus, the 1915-residue chain is MDAESIRLNNENLWAWLVRLLSKNPEWLSAKLRSFLPTMDLDCSYEPSNPEVIHRQLNRLFAQGMATWKSFINDLCFELDVPLDMEIPLVSIWGPRDEFSKQLGAGEESCPGPQLYHGAKRPFQSYGSSPRRKNSKKQQLELAKKYLKLLKTSAQQWHGGVCPGAWLTPHSPQTYIPPVLQWSRATAPLDAQEGATLGDPEAADNIDVSIQDLFSFKAHKGPRVTVLLGKAGMGKTTLAYRLRWRWAQGQLDRFQALFLFEFRQLNMITQLPTLPQLLFDLYLMPESEPDAVFQYLKENAQEVLLIFDGLDEALHADSVGTDNAGSALTLFSELCHGNLLPGCWVMTTSRPGKLPSCVPTEAATVHMWGFDGLRVEKYVTCFFSDLLSQELALKEMRTNARLRGMCAIPALCTVTCFCLRRLLPGSSPGQSAALLPTITQLYLQMVETFSPSETLLDTSILGFGKVALRGLDTGKVVFSVEDISPQLMSFGAVHSLLTSFCIHTRPGHEEIGYAFVHLSLQEFFAALYLMASHTVDKDTLVEYVTLNSHWVLRTKGRLGLSDHLPAFLAGLASHTCHMFLCQLAQQDRAWVGSRQAAVIQVLRKLASRKLTGPKMIELYHCVAETQDLELARFTAQSLPSRLSFHNFPLTHADLAALANILEHRDDPIHLDFDGCPLEPHCPEALVGCGQVENLSFKSRKCGDAFAEALCRSLPTMGSLKTLGLTGSRITAQGISHLIQTLPLCSQLEEVSLHDNQLKDPEVLSLVELLPSLPKLQKLDLSRNSFSRSILLSLVKVAITCPTVRKLQVRELDLIFYLSPVTETATQQSGASDVQGKDSLKEGQSRSLQLRLQKCQLRIRDAEALVELFQKSPQLEEVNLSGNHLEDDGCRLVAEAASQLHIAQKLDLSDNGLSQTGVTYVLKAMSTCGTLEDLHISLLNNTVVLTFAQEPREQEGSCKGRAPLISFVSPVTSELSQRSRRIRLTHCGFLAKHTETLCEALRASCQTHNLDHLDLSDNSLGGKGVILLTELLPGLGPLKSLNLSRNGLSMDAVFSLVQCLSSLQWVFHLDVSLESDCIFLRGAGTSRDALEPKFQTGVQVLELSQRYTSRSFCLQECQLEPTSLTFLCATLEKSPGPLEVQLSCKSLSDDSLKILLQCLPQLPQLSLLQLRHTVLSSRSPFLLADIFNLCPRVRKVTLRSLCHAVLHFDSNEEQEGVCCGFPGCSLSQEHMETLCCALSKCNALSQLDLTDNLLGDIGLRCLLECLPQLPISGWLDLSHNNISQEGILYLLETLPSYPNIQEVSVSLSSEQIFRMCFSKKEGAGTSLRLCECSFSPEQVSKLASSLSQAQQLTELWLTKCHLDLPQLTMLLNLVNRPTGLLGLRLEEPWVDSVSLPALMEVCAQASGCLTELSISEIQRKLWLQLEFPHQEGNSDSMALRLAHCDLETEHSHLMIQLVETYARLQQLSLSQVSFNDNDGTSSKLLQNILLSSCELKSFRLTFSQVSTKSLTHLAFGLGHCHHLEELDFSNNSLREEDTELLMGALQGTCRLKKLHLSFLPLGASSLALLIQGLSRMTLLQDLCLSHNQIGDVGTQCLAAILPKLPELRKFDLSHNQIGDVGTQCLAAILPKLPELRKFNLSHNQIGHVGTQCLAAILPKLPELRKFDLSRNQIGDVGTQCLAAILPKLPELRKFDLSGNRIGPAGGVQLVKSLTHFEHLEEIKLGNNALGEPTALELAQRLPPQLRVLCLPSSHLGPEGALGLAQALEQCPHIEEVSLAENNLAGGVPRFSKRLPLLRQIDLEFCKIEDQAARHLAANLTLFPALEKLLLSGNLLGDEVAAELAQVLPQMGQLKKVNLEWNRITARGAQLLAQGLVQGSCVPVIRLWNNPILNDVAQSLQSQEPRLDFSITDQQTL.

Positions 103–137 are disordered; the sequence is LGAGEESCPGPQLYHGAKRPFQSYGSSPRRKNSKK. The NACHT domain maps to 223–542; it reads RVTVLLGKAG…HTVDKDTLVE (320 aa). 229–236 lines the ATP pocket; sequence GKAGMGKT. 27 LRR repeats span residues 622–646, 716–740, 744–771, 772–796, 871–898, 900–923, 930–953, 1006–1033, 1034–1055, 1138–1161, 1162–1184, 1240–1263, 1265–1292, 1348–1371, 1481–1504, 1519–1542, 1552–1575, 1576–1598, 1603–1626, 1631–1654, 1659–1682, 1687–1711, 1715–1738, 1741–1768, 1769–1795, 1821–1845, and 1849–1872; these read VAET…SFHN, MGSL…LIQT, CSQL…LLPS, LPKL…LVKV, SPQL…AASQ, HIAQ…VLKA, LEDL…PREQ, THNL…LLPG, LGPL…VFSL, EVQL…LPQL, PQLS…LLAD, CNAL…CLLE, LPQL…LLET, AQQL…MLLN, SKLL…FSQV, CHHL…LLMG, KLHL…LSRM, TLLQ…CLAA, LPEL…CLAA, LPEL…LVKS, FEHL…ELAQ, PPQL…ALEQ, CPHI…RLPL, FPAL…LAQV, and MGQL…LLAQ.

Belongs to the NLRP family. As to quaternary structure, interacts with CHUK and IKBKB; prevents CHUK and IKBKB phosphorylation and inhibits their kinase activity. Interacts with RIGI and IFIH1; blocks the interaction of MAVS to RIGI. Expressed in spleen, thymus and lung.

Its subcellular location is the cytoplasm. Probable regulator of the NF-kappa-B and type I interferon signaling pathways. May also regulate the type II interferon signaling pathway. Plays a role in homeostatic control of innate immunity and in antiviral defense mechanisms. This Mus musculus (Mouse) protein is Protein NLRC5 (Nlrc5).